We begin with the raw amino-acid sequence, 120 residues long: MAYRKLGRTSAQRKAMLRDLATDLIINERIQTTETRAKELRSVVEKMITLGKRGDLHARRQAAAFIRNEVANAETGQDALQKLFADVAPRYAERQGGYTRIAKIGPRRGDAAPMVIIELV.

It belongs to the bacterial ribosomal protein bL17 family. Part of the 50S ribosomal subunit. Contacts protein L32.

The chain is Large ribosomal subunit protein bL17 from Bacillus cereus (strain ATCC 14579 / DSM 31 / CCUG 7414 / JCM 2152 / NBRC 15305 / NCIMB 9373 / NCTC 2599 / NRRL B-3711).